Consider the following 447-residue polypeptide: Trichothecene C-3 esterase (447 aa).

The signal sequence occupies residues 1 to 22; the sequence is MALNRLVFSLSLWLGFIGAAQA. 4 N-linked (GlcNAc...) asparagine glycosylation sites follow: Asn-59, Asn-66, Asn-136, and Asn-189. The Charge relay system role is filled by Ser-202. Asn-238, Asn-284, and Asn-314 each carry an N-linked (GlcNAc...) asparagine glycan. Residues Asp-352 and His-384 each act as charge relay system in the active site. N-linked (GlcNAc...) asparagine glycosylation is found at Asn-389 and Asn-423.

The protein belongs to the AB hydrolase superfamily. Lipase family.

The protein operates within sesquiterpene biosynthesis; trichothecene biosynthesis. In terms of biological role, trichothecene C-3 esterase; part of the core gene cluster that mediates the biosynthesis of trichothecenes, a very large family of chemically related bicyclic sesquiterpene compounds acting as mycotoxins, including T2-toxin. The biosynthesis of trichothecenes begins with the cyclization of farnesyl diphosphate to trichodiene and is catalyzed by the trichodiene synthase TRI5. Trichodiene undergoes a series of oxygenations catalyzed by the cytochrome P450 monooxygenase TRI4. TRI4 controls the addition of four oxygens at C-2, C-3, C-11, and the C-12, C-13-epoxide to form the intermediate isotrichotriol. Isotrichotriol then undergoes a non-enzymatic isomerization and cyclization to form isotrichodermol. During this process, the oxygen at the C-2 position becomes the pyran ring oxygen and the hydroxyl group at C-11 is lost. More complex type A trichothecenes are built by modifying isotrichodermol through a series of paired hydroxylation and acetylation or acylation steps. Isotrichodermol is converted to isotrichodermin by the acetyltransferase TRI101. TRI101 encodes a C-3 transacetylase that acts as a self-protection or resistance factor during biosynthesis and that the presence of a free C-3 hydroxyl group is a key component of Fusarium trichothecene phytotoxicity. A second hydroxyl group is added to C-15 by the trichothecene C-15 hydroxylase TRI11, producing 15-decalonectrin, which is then acetylated by TRI3, producing calonectrin. A third hydroxyl group is added at C-4 by the cytochrome P450 monooxygenase TRI13, converting calonectrin to 3,15-diacetoxyspirpenol, which is subsequently acetylated by the acetyltransferase TRI7. A fourth hydroxyl group is added to C-8 by the cytochrome P450 monooxygenase TRI1, followed by the addition of an isovaleryl moiety by TRI16. Finally, the acetyl group is removed from the C-3 position by the trichothecene C-3 esterase TRI8 to produce T-2 toxin. The polypeptide is Trichothecene C-3 esterase (Fusarium sporotrichioides).